Here is a 330-residue protein sequence, read N- to C-terminus: 3',5'-cyclic-nucleotide phosphodiesterase (330 aa).

A signal peptide spans 1–22 (MFKNKLAVLFTCLSVFSFSAQS).

This sequence belongs to the cyclic nucleotide phosphodiesterase class-II family.

The protein localises to the periplasm. The catalysed reaction is a nucleoside 3',5'-cyclic phosphate + H2O = a nucleoside 5'-phosphate + H(+). In terms of biological role, seems to allow the organism to grow on cAMP. The polypeptide is 3',5'-cyclic-nucleotide phosphodiesterase (cpdP) (Aliivibrio fischeri (Vibrio fischeri)).